The sequence spans 127 residues: Fluoride-specific ion channel FluC (127 aa).

4 helical membrane-spanning segments follow: residues 4-24, 35-55, 71-91, and 103-123; these read LLLAVFIGGGTGSVARWMLSM, IGTLTANLLGAFIIGMGFAWF, TGFCGGLTTFSTFSAEVVFLL, and VLINLLGSFAMTALAFWLFSA. 2 residues coordinate Na(+): G75 and T78.

The protein belongs to the fluoride channel Fluc/FEX (TC 1.A.43) family.

The protein resides in the cell inner membrane. The catalysed reaction is fluoride(in) = fluoride(out). Its activity is regulated as follows. Na(+) is not transported, but it plays an essential structural role and its presence is essential for fluoride channel function. Functionally, fluoride-specific ion channel. Important for reducing fluoride concentration in the cell, thus reducing its toxicity. This Salmonella agona (strain SL483) protein is Fluoride-specific ion channel FluC.